The sequence spans 753 residues: MNPSGTIGVLEQNGEEHLATPILGPSVHSDNPQERIQARRLRIAARQEARRREALGEYLDGKKESEEEQSKSYKQKEESRLKLTKLLLCGTELVTNIQVAADVREIHRRVEEEETKRQRLEKLENEVKTSQDKFDEITAKWEEGRRKRIPQELWEMLNSQQVHCAELIEDKNKLANELQQELKIKDDQYVKDLKKQSEDITLILERMEEQVKNVMKNFRQELIHIEKAFESERQELLSSNKKKWERALQAHNAKELEYLTNRMKKVEDYEKQLNKQRVWDCEEYNTIKIKLEQDVQILEQQLQQMKATYQLNQEKLEYNFQVLKKRDEESTVIKSQQKRKLNRLHDVVNNLRTKYTKQIRQFQDDNQSLTSDYKRLVTQFKDLQKALRHFIIIDEEKFREIWLMNEAEAKELAQRAFDVDRIIHSQHLGLPWNMPDLWFLNNVGPISLQQQKSVTQILEELLLQTEDEATEAAMSEDEDYMDLPNQISAKTTTKVLMLLCDESGFLIESKLLSLLHPLEKSECYLLRLDAIFSALAIEDEDDLYKLVNFFLRYRAHRLSSAQASSSIHSNVERTSLMSALERLSLMSQTDKGSMVSKSDQEPTEQEDEQEGDNASLSSRELEEQEDLSSPRFIHPNDVLKILEAFVTGLKKPKDAQPVLKLKKETRDNSKDTEYWESLAAVIPFFKQNLWDALYKALEKYYLVLTERAKLLMENESLEQQNAEMQSLLQQYLQAKVNTELQIPPTQGFRMPSK.

2 disordered regions span residues 1–33 (MNPS…DNPQ) and 55–76 (LGEY…YKQK). A coiled-coil region spans residues 100-388 (AADVREIHRR…QFKDLQKALR (289 aa)). A compositionally biased stretch (polar residues) spans 587–597 (SQTDKGSMVSK). Positions 587 to 628 (SQTDKGSMVSKSDQEPTEQEDEQEGDNASLSSRELEEQEDLS) are disordered. Residues 601 to 611 (EPTEQEDEQEG) show a composition bias toward acidic residues. Positions 703-739 (VLTERAKLLMENESLEQQNAEMQSLLQQYLQAKVNTE) form a coiled coil.

This sequence belongs to the DRC1 family. As to quaternary structure, component of the nexin-dynein regulatory complex (N-DRC). Interacts with CCDC65/DRC2, DRC3, GAS8/DRC4 and TCTE1/DRC5.

It localises to the cytoplasm. It is found in the cytoskeleton. The protein localises to the cilium axoneme. Its subcellular location is the flagellum axoneme. Functionally, component of the nexin-dynein regulatory complex (N-DRC) a key regulator of ciliary/flagellar motility which maintains the alignment and integrity of the distal axoneme and regulates microtubule sliding in motile axonemes. Plays a critical role in the assembly of N-DRC and also stabilizes the assembly of multiple inner dynein arms and radial spokes. Coassembles with CCDC65/DRC2 to form a central scaffold needed for assembly of the N-DRC and its attachment to the outer doublet microtubules. The polypeptide is Dynein regulatory complex protein 1 (Drc1) (Mus musculus (Mouse)).